A 60-amino-acid polypeptide reads, in one-letter code: MAKIKITWVKSTIGYKFDQAATIKALGFKKLNQSVIQDDSSAIRGMILKVRHLVVLEEVT.

The protein belongs to the universal ribosomal protein uL30 family. As to quaternary structure, part of the 50S ribosomal subunit.

The sequence is that of Large ribosomal subunit protein uL30 from Dehalococcoides mccartyi (strain CBDB1).